A 524-amino-acid chain; its full sequence is Acetyl-CoA hydrolase (524 aa).

279–283 (GIGNI) is a binding site for CoA. Glu304 acts as the 5-glutamyl coenzyme A thioester intermediate in catalysis. Gly398 is a binding site for CoA.

This sequence belongs to the acetyl-CoA hydrolase/transferase family.

The protein resides in the cytoplasm. The catalysed reaction is acetyl-CoA + H2O = acetate + CoA + H(+). In terms of biological role, presumably involved in regulating the intracellular acetyl-CoA pool for fatty acid and cholesterol synthesis and fatty acid oxidation. This Yarrowia lipolytica (strain CLIB 122 / E 150) (Yeast) protein is Acetyl-CoA hydrolase (ACH1).